The sequence spans 529 residues: Bifunctional purine biosynthesis protein PurH (529 aa).

Residues 1–148 (MQQRRPVRRA…KNHKDVAIVV (148 aa)) form the MGS-like domain.

Belongs to the PurH family.

It catalyses the reaction (6R)-10-formyltetrahydrofolate + 5-amino-1-(5-phospho-beta-D-ribosyl)imidazole-4-carboxamide = 5-formamido-1-(5-phospho-D-ribosyl)imidazole-4-carboxamide + (6S)-5,6,7,8-tetrahydrofolate. It carries out the reaction IMP + H2O = 5-formamido-1-(5-phospho-D-ribosyl)imidazole-4-carboxamide. It functions in the pathway purine metabolism; IMP biosynthesis via de novo pathway; 5-formamido-1-(5-phospho-D-ribosyl)imidazole-4-carboxamide from 5-amino-1-(5-phospho-D-ribosyl)imidazole-4-carboxamide (10-formyl THF route): step 1/1. Its pathway is purine metabolism; IMP biosynthesis via de novo pathway; IMP from 5-formamido-1-(5-phospho-D-ribosyl)imidazole-4-carboxamide: step 1/1. The polypeptide is Bifunctional purine biosynthesis protein PurH (Klebsiella pneumoniae subsp. pneumoniae (strain ATCC 700721 / MGH 78578)).